Consider the following 597-residue polypeptide: Elongation factor 4 (597 aa).

Positions 2–184 (KNIRNFSIIA…RLVRDIPAPE (183 aa)) constitute a tr-type G domain. GTP contacts are provided by residues 14 to 19 (DHGKST) and 131 to 134 (NKID).

Belongs to the TRAFAC class translation factor GTPase superfamily. Classic translation factor GTPase family. LepA subfamily.

The protein resides in the cell inner membrane. It catalyses the reaction GTP + H2O = GDP + phosphate + H(+). In terms of biological role, required for accurate and efficient protein synthesis under certain stress conditions. May act as a fidelity factor of the translation reaction, by catalyzing a one-codon backward translocation of tRNAs on improperly translocated ribosomes. Back-translocation proceeds from a post-translocation (POST) complex to a pre-translocation (PRE) complex, thus giving elongation factor G a second chance to translocate the tRNAs correctly. Binds to ribosomes in a GTP-dependent manner. This Edwardsiella ictaluri (strain 93-146) protein is Elongation factor 4.